The primary structure comprises 118 residues: Large ribosomal subunit protein uL22 (118 aa).

It belongs to the universal ribosomal protein uL22 family. As to quaternary structure, part of the 50S ribosomal subunit.

Its function is as follows. This protein binds specifically to 23S rRNA; its binding is stimulated by other ribosomal proteins, e.g. L4, L17, and L20. It is important during the early stages of 50S assembly. It makes multiple contacts with different domains of the 23S rRNA in the assembled 50S subunit and ribosome. Functionally, the globular domain of the protein is located near the polypeptide exit tunnel on the outside of the subunit, while an extended beta-hairpin is found that lines the wall of the exit tunnel in the center of the 70S ribosome. This Leuconostoc mesenteroides subsp. mesenteroides (strain ATCC 8293 / DSM 20343 / BCRC 11652 / CCM 1803 / JCM 6124 / NCDO 523 / NBRC 100496 / NCIMB 8023 / NCTC 12954 / NRRL B-1118 / 37Y) protein is Large ribosomal subunit protein uL22.